The following is a 319-amino-acid chain: MITSFESIEKKNAVYYPVDLKFVTDLSSDLSNTADGLGQAWYKISQVAVEHIILTALKINYVLNHRTLLLIYNKKVPDMDLINIIQSSIMVPRFVRDLIREILRPMHHSGITYIPDLDLSTRPTPHLLDTFYPIAEHLTRWNNVCQKLGFEMVPILPEAVQSVSLTFYSYETDELLSFDNLINLDWRIEAFGWTKHLVHNPTSEVDELGKSQTATSRKRVQEKDYECDDFRKVYERPLQNRRILGMIVYRYTCAPYTMRLGHLSPNCRFPTEKNHSETPPTSNRVLLSEQTMVHSIQKNRSKPKKVKIVTTECSADRSH.

The protein localises to the virion. Functionally, the capsid protein self-assembles to form an icosahedral capsid with a T=2 symmetry made of 120 subunits. The polypeptide is Capsid protein (Cryptosporidium parvum virus 1 (strain KSU-1)).